The primary structure comprises 486 residues: Siroheme synthase (486 aa).

The interval 1 to 203 (MNYFPIFANL…RQNTLAEREL (203 aa)) is precorrin-2 dehydrogenase /sirohydrochlorin ferrochelatase. Residues 22–23 (AV) and 43–44 (KH) contribute to the NAD(+) site. Position 128 is a phosphoserine (Ser128). A uroporphyrinogen-III C-methyltransferase region spans residues 217–486 (GSVSLVGAGP…LGTGQEQQAA (270 aa)). Pro226 contacts S-adenosyl-L-methionine. The active-site Proton acceptor is Asp249. Lys271 acts as the Proton donor in catalysis. S-adenosyl-L-methionine-binding positions include 302-304 (GGD), Val307, 332-333 (TA), Met384, and Gly413.

The protein in the N-terminal section; belongs to the precorrin-2 dehydrogenase / sirohydrochlorin ferrochelatase family. This sequence in the C-terminal section; belongs to the precorrin methyltransferase family.

The catalysed reaction is uroporphyrinogen III + 2 S-adenosyl-L-methionine = precorrin-2 + 2 S-adenosyl-L-homocysteine + H(+). The enzyme catalyses precorrin-2 + NAD(+) = sirohydrochlorin + NADH + 2 H(+). It carries out the reaction siroheme + 2 H(+) = sirohydrochlorin + Fe(2+). Its pathway is cofactor biosynthesis; adenosylcobalamin biosynthesis; precorrin-2 from uroporphyrinogen III: step 1/1. The protein operates within cofactor biosynthesis; adenosylcobalamin biosynthesis; sirohydrochlorin from precorrin-2: step 1/1. It functions in the pathway porphyrin-containing compound metabolism; siroheme biosynthesis; precorrin-2 from uroporphyrinogen III: step 1/1. It participates in porphyrin-containing compound metabolism; siroheme biosynthesis; siroheme from sirohydrochlorin: step 1/1. Its pathway is porphyrin-containing compound metabolism; siroheme biosynthesis; sirohydrochlorin from precorrin-2: step 1/1. Functionally, multifunctional enzyme that catalyzes the SAM-dependent methylations of uroporphyrinogen III at position C-2 and C-7 to form precorrin-2 via precorrin-1. Then it catalyzes the NAD-dependent ring dehydrogenation of precorrin-2 to yield sirohydrochlorin. Finally, it catalyzes the ferrochelation of sirohydrochlorin to yield siroheme. This chain is Siroheme synthase, found in Neisseria meningitidis serogroup A / serotype 4A (strain DSM 15465 / Z2491).